The sequence spans 519 residues: Cyclin-dependent kinase C-1 (519 aa).

The region spanning 25–325 is the Protein kinase domain; that stretch reads FEKLEQIGEG…AQDALDAEYF (301 aa). Residues 31 to 39 and Lys-54 each bind ATP; that span reads IGEGTYGQV. Thr-35 bears the Phosphothreonine mark. At Tyr-36 the chain carries Phosphotyrosine. The Proton acceptor role is filled by Asp-164. At Thr-198 the chain carries Phosphothreonine. The span at 336 to 348 shows a compositional bias: basic and acidic residues; that stretch reads SLPKYESSHEFQT. Residues 336–519 are disordered; it reads SLPKYESSHE…RNQQQYGNWQ (184 aa). A compositionally biased stretch (gly residues) spans 426 to 444; sequence GNQGGGYPNRGGQGGGGSY. Residues 445-454 show a composition bias toward low complexity; sequence GNAPYPQQGR. Composition is skewed to gly residues over residues 464 to 483 and 490 to 499; these read GMAG…GGGS and GPYGPSGPGR. Positions 505–519 are enriched in polar residues; that stretch reads QQGGSRNQQQYGNWQ.

The protein belongs to the protein kinase superfamily. CMGC Ser/Thr protein kinase family. CDC2/CDKX subfamily.

The enzyme catalyses L-seryl-[protein] + ATP = O-phospho-L-seryl-[protein] + ADP + H(+). The catalysed reaction is L-threonyl-[protein] + ATP = O-phospho-L-threonyl-[protein] + ADP + H(+). It catalyses the reaction [DNA-directed RNA polymerase] + ATP = phospho-[DNA-directed RNA polymerase] + ADP + H(+). This is Cyclin-dependent kinase C-1 (CDKC-1) from Oryza sativa subsp. japonica (Rice).